Here is a 496-residue protein sequence, read N- to C-terminus: Lysine--tRNA ligase (496 aa).

Residues Glu-409 and Glu-416 each contribute to the Mg(2+) site.

The protein belongs to the class-II aminoacyl-tRNA synthetase family. Homodimer. The cofactor is Mg(2+).

The protein localises to the cytoplasm. The catalysed reaction is tRNA(Lys) + L-lysine + ATP = L-lysyl-tRNA(Lys) + AMP + diphosphate. This is Lysine--tRNA ligase from Streptococcus suis (strain 05ZYH33).